The chain runs to 152 residues: Sec-independent protein translocase protein TatB (152 aa).

The helical transmembrane segment at 1 to 21 threads the bilayer; sequence MFDVAPSELLLVAVVALVVIG. Over residues 60 to 71 the composition is skewed to basic and acidic residues; sequence EDMEKRWAEENA. A disordered region spans residues 60–152; sequence EDMEKRWAEE…KEADQQEKQS (93 aa). Composition is skewed to low complexity over residues 84–98 and 124–140; these read TASTSSPATPSPVSD and AANHTETTATTAASTPA. Over residues 141–152 the composition is skewed to basic and acidic residues; it reads KPKEADQQEKQS.

Belongs to the TatB family. In terms of assembly, the Tat system comprises two distinct complexes: a TatABC complex, containing multiple copies of TatA, TatB and TatC subunits, and a separate TatA complex, containing only TatA subunits. Substrates initially bind to the TatABC complex, which probably triggers association of the separate TatA complex to form the active translocon.

It is found in the cell inner membrane. Functionally, part of the twin-arginine translocation (Tat) system that transports large folded proteins containing a characteristic twin-arginine motif in their signal peptide across membranes. Together with TatC, TatB is part of a receptor directly interacting with Tat signal peptides. TatB may form an oligomeric binding site that transiently accommodates folded Tat precursor proteins before their translocation. This Zymomonas mobilis subsp. mobilis (strain ATCC 31821 / ZM4 / CP4) protein is Sec-independent protein translocase protein TatB.